The sequence spans 371 residues: MTKSPNLTVAVIGTGFGQAVHIPALQYHQQTQAIAIYHRDLAKAQEVAKSNDLAYSYNNLEELLANPEVQAVTIASPPFLHYEMAKQAILAGKHVLLEKPMTLRVEETIELYHLARQREVQVIPDFEFRFVPAWQYVAELLGQGILGQLKLIKVDWLVGSRANPNRAWNWYAQREKGGGALGALASHTFDYLHWLFGPAQSLAANLSVAIAERPDPLDNNRLKPVTAEDTALISLTLANDVPCQINITSVAHGGRGHWLEIYGEKGSLVLGSDNLKDYVHGFRIFHHPVGQPMQELTVPTRLDFPKVFADGRLAPVVRVVDEWVQSINQKRTPTPSLRHGVYSQLLMDLTKQAHQEKHWVAVPDLDRLLAQ.

The protein belongs to the Gfo/Idh/MocA family.

This is an uncharacterized protein from Synechocystis sp. (strain ATCC 27184 / PCC 6803 / Kazusa).